Consider the following 216-residue polypeptide: Ribosomal RNA small subunit methyltransferase G (216 aa).

S-adenosyl-L-methionine-binding positions include glycine 73, leucine 78, 124 to 125 (AE), and arginine 139.

Belongs to the methyltransferase superfamily. RNA methyltransferase RsmG family.

It localises to the cytoplasm. Specifically methylates the N7 position of guanine in position 518 of 16S rRNA. The polypeptide is Ribosomal RNA small subunit methyltransferase G (Paenarthrobacter aurescens (strain TC1)).